The sequence spans 150 residues: Profilin (150 aa).

The protein belongs to the profilin family. As to quaternary structure, occurs in many kinds of cells as a complex with monomeric actin in a 1:1 ratio.

It is found in the cytoplasm. The protein resides in the cytoskeleton. In terms of biological role, binds to actin and affects the structure of the cytoskeleton. At high concentrations, profilin prevents the polymerization of actin, whereas it enhances it at low concentrations. By binding to PIP2, it inhibits the formation of IP3 and DG. This Trypanosoma brucei brucei protein is Profilin.